The following is a 462-amino-acid chain: Protein ultraspiracle homolog (462 aa).

The tract at residues 1 to 113 (MSSVAKKDKR…NHPLSGSKHL (113 aa)) is modulating. 2 NR C4-type zinc fingers span residues 114–134 (CSICGDRASGKHYGVYSCEGC) and 150–174 (CREDKNCIIDKRQRNRCQYCRYQKC). A DNA-binding region (nuclear receptor) is located at residues 114–179 (CSICGDRASG…RYQKCLACGM (66 aa)). Residues 180 to 201 (KREAVQEERQRAARRTEDAHPS) are hinge. Residues 204–453 (VQELSIERLL…SYIRDALCNH (250 aa)) enclose the NR LBD domain.

Belongs to the nuclear hormone receptor family. NR2 subfamily. Heterodimer of USP and ECR. Abundant expression seen in males and ovaries.

Its subcellular location is the nucleus. In Bombyx mori (Silk moth), this protein is Protein ultraspiracle homolog (USP).